The following is a 455-amino-acid chain: Glutamyl-tRNA reductase (455 aa).

Substrate-binding positions include 49-52 (TCNR), S109, 114-116 (ETQ), and Q120. The active-site Nucleophile is the C50. 189-194 (GAGKMG) serves as a coordination point for NADP(+).

This sequence belongs to the glutamyl-tRNA reductase family. In terms of assembly, homodimer.

It catalyses the reaction (S)-4-amino-5-oxopentanoate + tRNA(Glu) + NADP(+) = L-glutamyl-tRNA(Glu) + NADPH + H(+). It functions in the pathway porphyrin-containing compound metabolism; protoporphyrin-IX biosynthesis; 5-aminolevulinate from L-glutamyl-tRNA(Glu): step 1/2. In terms of biological role, catalyzes the NADPH-dependent reduction of glutamyl-tRNA(Glu) to glutamate 1-semialdehyde (GSA). The protein is Glutamyl-tRNA reductase of Bacillus pumilus (strain SAFR-032).